An 808-amino-acid chain; its full sequence is Probable inorganic carbon transporter subunit DabA (808 aa).

Zn(2+)-binding residues include Cys334, Asp336, His494, and Cys509.

The protein belongs to the inorganic carbon transporter (TC 9.A.2) DabA family. In terms of assembly, forms a complex with DabB. Zn(2+) is required as a cofactor.

The protein localises to the cell inner membrane. Its function is as follows. Part of an energy-coupled inorganic carbon pump. In Allorhizobium ampelinum (strain ATCC BAA-846 / DSM 112012 / S4) (Agrobacterium vitis (strain S4)), this protein is Probable inorganic carbon transporter subunit DabA.